The primary structure comprises 398 residues: Probable elongation factor 1-gamma (398 aa).

Residues 66-199 (GTSANAETVQ…SVAQFNQAKF (134 aa)) form the GST C-terminal domain. Positions 210–248 (APKAEKPKKEAKPAAAAAQPEDDEPKEEKSKDPFQDMPK) are disordered. The span at 211–221 (PKAEKPKKEAK) shows a compositional bias: basic and acidic residues. Residues 239 to 398 (SKDPFQDMPK…KKFNQGKIFK (160 aa)) form the EF-1-gamma C-terminal domain.

As to quaternary structure, EF-1 is composed of four subunits: alpha, beta, delta, and gamma. AMPylated by fic-1.

Functionally, probably plays a role in anchoring the complex to other cellular components. The chain is Probable elongation factor 1-gamma from Caenorhabditis elegans.